The primary structure comprises 101 residues: Large ribosomal subunit protein bL28 (101 aa).

The protein belongs to the bacterial ribosomal protein bL28 family.

The sequence is that of Large ribosomal subunit protein bL28 from Rhodopseudomonas palustris (strain ATCC BAA-98 / CGA009).